Here is a 1492-residue protein sequence, read N- to C-terminus: Putative leucine-rich repeat-containing protein DDB_G0290503 (1492 aa).

A PH domain is found at 2 to 111 (SILLEGYLEK…WIEGIKDAIK (110 aa)). LRR repeat units lie at residues 123 to 144 (LDGL…IKHL), 180 to 204 (IKSL…VEKL), 258 to 284 (QESL…QFEK), 329 to 351 (KNQF…SIVD), 352 to 375 (DKLK…EIDN), 389 to 413 (ISKI…SIDK), 439 to 462 (LEKL…ILEI), 519 to 543 (INEL…NQSS), 551 to 575 (LNQL…IIER), 579 to 603 (IDQL…NESS), 632 to 656 (INEL…NQSS), 728 to 752 (LDEL…NQSS), 806 to 830 (LKSL…NQDS), 831 to 855 (LDEL…NQSS), 895 to 919 (INEL…NESS), 927 to 951 (LIQL…IIER), 955 to 979 (LNQL…NQSS), 1013 to 1036 (NEKL…NESL), 1044 to 1068 (FENL…IIDV), 1138 to 1164 (LQDL…ELKE), and 1210 to 1232 (NAHL…GFNE). The disordered stretch occupies residues 1272-1292 (RSSSSSLHQQQQMISPDLSNS). Positions 1274-1286 (SSSSLHQQQQMIS) are enriched in low complexity. LRR repeat units lie at residues 1424–1444 (SSEK…KYFF) and 1445–1468 (AIAR…IFDM).

This chain is Putative leucine-rich repeat-containing protein DDB_G0290503, found in Dictyostelium discoideum (Social amoeba).